A 447-amino-acid polypeptide reads, in one-letter code: uncharacterized protein (447 aa).

Residues 29 to 201 (VDVYPLVFVF…TQYTFKVHRA (173 aa)) form the FAD-binding PCMH-type domain.

Belongs to the oxygen-dependent FAD-linked oxidoreductase family. FAD serves as cofactor.

The protein resides in the spore coat. This is an uncharacterized protein from Bacillus subtilis (strain 168).